Reading from the N-terminus, the 248-residue chain is tRNA pseudouridine synthase A (248 aa).

Catalysis depends on D52, which acts as the Nucleophile. Y111 provides a ligand contact to substrate.

This sequence belongs to the tRNA pseudouridine synthase TruA family. As to quaternary structure, homodimer.

It carries out the reaction uridine(38/39/40) in tRNA = pseudouridine(38/39/40) in tRNA. Functionally, formation of pseudouridine at positions 38, 39 and 40 in the anticodon stem and loop of transfer RNAs. The sequence is that of tRNA pseudouridine synthase A from Methylocella silvestris (strain DSM 15510 / CIP 108128 / LMG 27833 / NCIMB 13906 / BL2).